We begin with the raw amino-acid sequence, 509 residues long: Phosphoenolpyruvate carboxylase (509 aa).

It belongs to the PEPCase type 2 family. Homotetramer. Requires Mg(2+) as cofactor.

It carries out the reaction oxaloacetate + phosphate = phosphoenolpyruvate + hydrogencarbonate. Functionally, catalyzes the irreversible beta-carboxylation of phosphoenolpyruvate (PEP) to form oxaloacetate (OAA), a four-carbon dicarboxylic acid source for the tricarboxylic acid cycle. The sequence is that of Phosphoenolpyruvate carboxylase from Metallosphaera sedula (strain ATCC 51363 / DSM 5348 / JCM 9185 / NBRC 15509 / TH2).